The chain runs to 439 residues: Proton pump-interactor 4 (439 aa).

Residues 286–354 (KEEKEIDEET…AKKKKAVCKS (69 aa)) are a coiled coil. Residues 415-435 (LWVWTVSSAAVALPLALLVVF) form a helical membrane-spanning segment.

This sequence belongs to the plant Proton pump-interactor protein family.

Its subcellular location is the cell membrane. It is found in the endoplasmic reticulum membrane. Its function is as follows. May regulate plasma membrane ATPase activity. The polypeptide is Proton pump-interactor 4 (PPI4) (Arabidopsis thaliana (Mouse-ear cress)).